A 382-amino-acid chain; its full sequence is Sphingoid long-chain base transporter RSB1 (382 aa).

Over M1–R34 the chain is Extracellular. N-linked (GlcNAc...) asparagine glycosylation is found at N3 and N6. The helical transmembrane segment at F35 to L55 threads the bilayer. The Cytoplasmic portion of the chain corresponds to M56–R57. Residues Q58 to G78 form a helical membrane-spanning segment. Residues R79 to D90 are Extracellular-facing. The helical transmembrane segment at A91–Y111 threads the bilayer. Topologically, residues Y112–S135 are cytoplasmic. The helical transmembrane segment at F136 to C156 threads the bilayer. Residues G157–H171 are Extracellular-facing. Residues V172–F192 traverse the membrane as a helical segment. The Cytoplasmic segment spans residues H193–R241. The chain crosses the membrane as a helical span at residues W242–C262. Residues C263–E281 lie on the Extracellular side of the membrane. The helical transmembrane segment at W282 to F302 threads the bilayer. At H303–L382 the chain is on the cytoplasmic side.

Belongs to the lipid-translocating exporter (LTE) (TC 9.A.26.1) family.

The protein resides in the cell membrane. Its function is as follows. Catalyzes the ATP-dependent translocation of sphingoid long-chain bases (LCBs) from the cytoplasmic site toward the extracytoplasmic side of the membrane (flip-flop). Involved in the establishment of the functional lipid asymmetry of the plasma membrane. Regulates intracellular levels of LCBs, sphingolipid precursors that are growth inhibitory at increased levels. The polypeptide is Sphingoid long-chain base transporter RSB1 (RSB1) (Saccharomyces cerevisiae (strain JAY291) (Baker's yeast)).